Here is a 242-residue protein sequence, read N- to C-terminus: Tryptophan synthase alpha chain (242 aa).

Residues Glu-31 and Asp-42 each act as proton acceptor in the active site.

Belongs to the TrpA family. Tetramer of two alpha and two beta chains.

The catalysed reaction is (1S,2R)-1-C-(indol-3-yl)glycerol 3-phosphate + L-serine = D-glyceraldehyde 3-phosphate + L-tryptophan + H2O. It participates in amino-acid biosynthesis; L-tryptophan biosynthesis; L-tryptophan from chorismate: step 5/5. The alpha subunit is responsible for the aldol cleavage of indoleglycerol phosphate to indole and glyceraldehyde 3-phosphate. The sequence is that of Tryptophan synthase alpha chain from Staphylococcus aureus (strain bovine RF122 / ET3-1).